The sequence spans 217 residues: Phosphatidylserine decarboxylase proenzyme (217 aa).

Catalysis depends on Ser-183, which acts as the Schiff-base intermediate with substrate; via pyruvic acid. The residue at position 183 (Ser-183) is a Pyruvic acid (Ser); by autocatalysis.

Belongs to the phosphatidylserine decarboxylase family. PSD-A subfamily. Heterodimer of a large membrane-associated beta subunit and a small pyruvoyl-containing alpha subunit. Pyruvate is required as a cofactor. Post-translationally, is synthesized initially as an inactive proenzyme. Formation of the active enzyme involves a self-maturation process in which the active site pyruvoyl group is generated from an internal serine residue via an autocatalytic post-translational modification. Two non-identical subunits are generated from the proenzyme in this reaction, and the pyruvate is formed at the N-terminus of the alpha chain, which is derived from the carboxyl end of the proenzyme. The post-translation cleavage follows an unusual pathway, termed non-hydrolytic serinolysis, in which the side chain hydroxyl group of the serine supplies its oxygen atom to form the C-terminus of the beta chain, while the remainder of the serine residue undergoes an oxidative deamination to produce ammonia and the pyruvoyl prosthetic group on the alpha chain.

It is found in the cell membrane. It catalyses the reaction a 1,2-diacyl-sn-glycero-3-phospho-L-serine + H(+) = a 1,2-diacyl-sn-glycero-3-phosphoethanolamine + CO2. Its pathway is phospholipid metabolism; phosphatidylethanolamine biosynthesis; phosphatidylethanolamine from CDP-diacylglycerol: step 2/2. Catalyzes the formation of phosphatidylethanolamine (PtdEtn) from phosphatidylserine (PtdSer). The protein is Phosphatidylserine decarboxylase proenzyme of Cupriavidus pinatubonensis (strain JMP 134 / LMG 1197) (Cupriavidus necator (strain JMP 134)).